The sequence spans 605 residues: Poly [ADP-ribose] polymerase 2-B (605 aa).

Residues 96–122 are disordered; sequence NAAAAAAVTDGGDQDKTKSAKDDDGDD. Over residues 108-122 the composition is skewed to basic and acidic residues; it reads DQDKTKSAKDDDGDD. Residues 153–260 form the WGR domain; it reads AYHVLQVGDE…TKLETRTASF (108 aa). The PARP alpha-helical domain maps to 250-370; sequence ETKLETRTAS…EIEIAIKLLE (121 aa). A PARP catalytic domain is found at 378–605; it reads HPLYARYKQF…NVNFNFKRWG (228 aa).

Belongs to the ARTD/PARP family.

The protein localises to the nucleus. It catalyses the reaction NAD(+) + (ADP-D-ribosyl)n-acceptor = nicotinamide + (ADP-D-ribosyl)n+1-acceptor + H(+).. The catalysed reaction is L-aspartyl-[protein] + NAD(+) = 4-O-(ADP-D-ribosyl)-L-aspartyl-[protein] + nicotinamide. The enzyme catalyses L-glutamyl-[protein] + NAD(+) = 5-O-(ADP-D-ribosyl)-L-glutamyl-[protein] + nicotinamide. Its function is as follows. Involved in the base excision repair (BER) pathway, by catalyzing the poly(ADP-ribosyl)ation of a limited number of acceptor proteins involved in chromatin architecture and in DNA metabolism. This modification follows DNA damages and appears as an obligatory step in a detection/signaling pathway leading to the reparation of DNA strand breaks. The protein is Poly [ADP-ribose] polymerase 2-B (PARP2-B) of Oryza sativa subsp. japonica (Rice).